The sequence spans 433 residues: 23S rRNA (uracil(1939)-C(5))-methyltransferase RlmD (433 aa).

The TRAM domain maps to 1-53; that stretch reads MPTAVIESLDHEGRGIARVEGKAVFIEGGLPGETVEYRVLRSKPNYEQAEATR. 4 residues coordinate [4Fe-4S] cluster: cysteine 66, cysteine 72, cysteine 75, and cysteine 154. S-adenosyl-L-methionine-binding residues include glutamine 263, phenylalanine 292, asparagine 297, glutamate 313, asparagine 341, and aspartate 362. The active-site Nucleophile is cysteine 389.

The protein belongs to the class I-like SAM-binding methyltransferase superfamily. RNA M5U methyltransferase family. RlmD subfamily.

The enzyme catalyses uridine(1939) in 23S rRNA + S-adenosyl-L-methionine = 5-methyluridine(1939) in 23S rRNA + S-adenosyl-L-homocysteine + H(+). In terms of biological role, catalyzes the formation of 5-methyl-uridine at position 1939 (m5U1939) in 23S rRNA. This Azoarcus sp. (strain BH72) protein is 23S rRNA (uracil(1939)-C(5))-methyltransferase RlmD.